The chain runs to 109 residues: uncharacterized protein (109 aa).

The tract at residues 67–96 is disordered; that stretch reads YFGNKLWRPTPRSGQSGQSRPKTGPHGSQR. Over residues 78-87 the composition is skewed to polar residues; that stretch reads RSGQSGQSRP.

This is an uncharacterized protein from Saccharomyces cerevisiae (strain ATCC 204508 / S288c) (Baker's yeast).